Here is a 126-residue protein sequence, read N- to C-terminus: Small ribosomal subunit protein uS12 (126 aa).

A disordered region spans residues 1-26 (MPTINQLVRKGRASETTKSKSPALQD). At Asp89 the chain carries 3-methylthioaspartic acid. Positions 102-126 (LDTQGVKDRRQARSKYGAKRAKAAK) are disordered. Over residues 113–126 (ARSKYGAKRAKAAK) the composition is skewed to basic residues.

It belongs to the universal ribosomal protein uS12 family. As to quaternary structure, part of the 30S ribosomal subunit. Contacts proteins S8 and S17. May interact with IF1 in the 30S initiation complex.

In terms of biological role, with S4 and S5 plays an important role in translational accuracy. Interacts with and stabilizes bases of the 16S rRNA that are involved in tRNA selection in the A site and with the mRNA backbone. Located at the interface of the 30S and 50S subunits, it traverses the body of the 30S subunit contacting proteins on the other side and probably holding the rRNA structure together. The combined cluster of proteins S8, S12 and S17 appears to hold together the shoulder and platform of the 30S subunit. This chain is Small ribosomal subunit protein uS12, found in Burkholderia mallei (strain ATCC 23344).